Reading from the N-terminus, the 62-residue chain is Large ribosomal subunit protein eL24 (62 aa).

4 residues coordinate Zn(2+): C6, C9, C32, and C36. A C4-type zinc finger spans residues 6-36 (CSFCEGTIEPGCGKKYVKKDGSVMHFCSSKC).

It belongs to the eukaryotic ribosomal protein eL24 family. As to quaternary structure, part of the 50S ribosomal subunit. Forms a cluster with proteins L3 and L14. Zn(2+) is required as a cofactor.

Functionally, binds to the 23S rRNA. The polypeptide is Large ribosomal subunit protein eL24 (Methanococcus maripaludis (strain C7 / ATCC BAA-1331)).